Consider the following 202-residue polypeptide: MPGSALLSLQQELRRGFEALKAAKDTFDGGHAECQELVSSLGNLAPQLKALKQVQISETPLSGFPCLQQRLHYKLSLAVDALLAKLAEKMAALQKVWDAFAQQVFTVVQLYEKNTDALDISVCVSRSAVCPSVSDMLEWLQDADRYYRLQLMQSRLLLQTLTPTDLTSMETAPNRWRSVRSARQEERIADALCQVSIFLETE.

As to quaternary structure, part of the 55LCC heterohexameric ATPase complex. Does not associate with pre-60S ribosomal particles.

The protein resides in the nucleus. It is found in the cytoplasm. In terms of biological role, part of the 55LCC heterohexameric ATPase complex which is chromatin-associated and promotes replisome proteostasis to maintain replication fork progression and genome stability. Required for replication fork progression, sister chromatid cohesion, and chromosome stability. The ATPase activity is specifically enhanced by replication fork DNA and is coupled to cysteine protease-dependent cleavage of replisome substrates in response to replication fork damage. Uses ATPase activity to process replisome substrates in S-phase, facilitating their proteolytic turnover from chromatin to ensure DNA replication and mitotic fidelity. Involved in the cytoplasmic maturation steps of pre-60S ribosomal particles by promoting the release of shuttling protein RSL24D1/RLP24 from the pre-ribosomal particles. Plays an essential role in early embryonic development. In Danio rerio (Zebrafish), this protein is AFG2-interacting ribosome maturation factor (airim).